Reading from the N-terminus, the 249-residue chain is Phosphate import ATP-binding protein PstB 1 (249 aa).

Residues 4 to 244 (FNIENLDLFY…PKDDRTQGYV (241 aa)) enclose the ABC transporter domain. 36-43 (GPSGCGKS) contributes to the ATP binding site.

This sequence belongs to the ABC transporter superfamily. Phosphate importer (TC 3.A.1.7) family. As to quaternary structure, the complex is composed of two ATP-binding proteins (PstB), two transmembrane proteins (PstC and PstA) and a solute-binding protein (PstS).

It localises to the cell inner membrane. It catalyses the reaction phosphate(out) + ATP + H2O = ADP + 2 phosphate(in) + H(+). Its function is as follows. Part of the ABC transporter complex PstSACB involved in phosphate import. Responsible for energy coupling to the transport system. This is Phosphate import ATP-binding protein PstB 1 from Aliivibrio fischeri (strain ATCC 700601 / ES114) (Vibrio fischeri).